We begin with the raw amino-acid sequence, 1760 residues long: Cilia- and flagella-associated protein 44 (1760 aa).

WD repeat units lie at residues 119-160 (GATK…MVLR), 163-202 (CHNT…TGLK), 213-251 (LEIS…CCFA), 276-315 (CHEG…VAEG), and 388-427 (FNGG…ELYK). Residues 1155-1165 (RQEEKLREQTA) are compositionally biased toward basic and acidic residues. The segment at 1155–1224 (RQEEKLREQT…FGTAAARTRS (70 aa)) is disordered. Polar residues predominate over residues 1181 to 1190 (PATNTDTSGA). The segment covering 1194–1205 (ATRRSEGEDSRK) has biased composition (basic and acidic residues). Residues 1348–1389 (YDEARNSRDRCLREMEELQRLVQDQTASIEKLQEANKVFRRE) are a coiled coil. Positions 1420–1444 (HSDMSGNDDDITSDDDDDDDMGEDE) are disordered. Residues 1425–1444 (GNDDDITSDDDDDDDMGEDE) are compositionally biased toward acidic residues.

Belongs to the CFAP44 family.

Its subcellular location is the cell projection. The protein resides in the cilium. It localises to the flagellum. It is found in the cytoplasm. The protein localises to the cytoskeleton. Its subcellular location is the flagellum axoneme. In terms of biological role, flagellar protein involved in flagellum axoneme organization and function. The sequence is that of Cilia- and flagella-associated protein 44 from Trypanosoma brucei brucei (strain 927/4 GUTat10.1).